The sequence spans 295 residues: Ectoine dioxygenase (295 aa).

Residue Gln129 coordinates L-ectoine. 2-oxoglutarate is bound at residue Lys135. Fe cation-binding residues include His146, Asp148, and His247.

This sequence belongs to the PhyH family. EctD subfamily. Homodimer. The cofactor is Fe(2+).

It catalyses the reaction L-ectoine + 2-oxoglutarate + O2 = 5-hydroxyectoine + succinate + CO2. Functionally, involved in the biosynthesis of 5-hydroxyectoine, called compatible solute, which helps organisms to survive extreme osmotic stress by acting as a highly soluble organic osmolyte. Catalyzes the 2-oxoglutarate-dependent selective hydroxylation of L-ectoine to yield (4S,5S)-5-hydroxyectoine. This Streptomyces avermitilis (strain ATCC 31267 / DSM 46492 / JCM 5070 / NBRC 14893 / NCIMB 12804 / NRRL 8165 / MA-4680) protein is Ectoine dioxygenase.